A 134-amino-acid polypeptide reads, in one-letter code: Putative esterase PA0474 (134 aa).

Belongs to the thioesterase PaaI family.

The chain is Putative esterase PA0474 from Pseudomonas aeruginosa (strain ATCC 15692 / DSM 22644 / CIP 104116 / JCM 14847 / LMG 12228 / 1C / PRS 101 / PAO1).